Consider the following 531-residue polypeptide: Glucose-6-phosphate exchanger SLC37A1 (531 aa).

Residues 18-38 (QWYRAFIFMLTFLLYASFHLS) form a helical membrane-spanning segment. The tract at residues 53–72 (CTAGDGPESPFSDPSSSTRH) is disordered. 11 helical membrane passes run 100-120 (GALD…SGII), 129-149 (YLTF…LGYF), 157-177 (FYVV…PSVV), 192-214 (IMGI…AGYW), 222-242 (SFIV…LFLI), 332-352 (LCLL…PLYI), 364-384 (GELS…AGVI), 392-412 (ASTC…FSSV), 419-439 (ATIA…ALIT), 464-484 (AIID…AGLI), and 488-508 (GWSN…LFLV).

Belongs to the major facilitator superfamily. Organophosphate:Pi antiporter (OPA) (TC 2.A.1.4) family.

The protein localises to the endoplasmic reticulum membrane. The enzyme catalyses D-glucose 6-phosphate(in) + phosphate(out) = D-glucose 6-phosphate(out) + phosphate(in). Its activity is regulated as follows. Inhibited by vanadate but not by chlorogenic acid. In terms of biological role, inorganic phosphate and glucose-6-phosphate antiporter. May transport cytoplasmic glucose-6-phosphate into the lumen of the endoplasmic reticulum and translocate inorganic phosphate into the opposite direction. Independent of a lumenal glucose-6-phosphatase. May not play a role in homeostatic regulation of blood glucose levels. This Mus musculus (Mouse) protein is Glucose-6-phosphate exchanger SLC37A1.